We begin with the raw amino-acid sequence, 586 residues long: Aspartate--tRNA(Asp/Asn) ligase (586 aa).

An L-aspartate-binding site is contributed by glutamate 176. Positions 200-203 are aspartate; the sequence is QIFK. Arginine 222 lines the L-aspartate pocket. Residues 222 to 224 and glutamine 231 contribute to the ATP site; that span reads RDE. Position 449 (histidine 449) interacts with L-aspartate. Residue glutamate 483 coordinates ATP. Arginine 490 serves as a coordination point for L-aspartate. An ATP-binding site is contributed by 535-538; sequence GIDR.

The protein belongs to the class-II aminoacyl-tRNA synthetase family. Type 1 subfamily. In terms of assembly, homodimer.

It is found in the cytoplasm. It catalyses the reaction tRNA(Asx) + L-aspartate + ATP = L-aspartyl-tRNA(Asx) + AMP + diphosphate. Its function is as follows. Aspartyl-tRNA synthetase with relaxed tRNA specificity since it is able to aspartylate not only its cognate tRNA(Asp) but also tRNA(Asn). Reaction proceeds in two steps: L-aspartate is first activated by ATP to form Asp-AMP and then transferred to the acceptor end of tRNA(Asp/Asn). This Brachyspira hyodysenteriae (strain ATCC 49526 / WA1) protein is Aspartate--tRNA(Asp/Asn) ligase.